The primary structure comprises 1007 residues: SUPPRESSOR OF ABI3-5 (1007 aa).

2 disordered regions span residues 1–185 and 204–269; these read MDPS…RDRE and ESPH…FSAT. 4 stretches are compositionally biased toward basic and acidic residues: residues 40 to 49, 94 to 120, 138 to 185, and 204 to 214; these read PDERLMRDDV, YYHD…RYDG, HSRD…RDRE, and ESPHKRYEKSR. Residues 227-236 show a composition bias toward basic residues; that stretch reads RSPRGRSHGR. The span at 237–264 shows a compositional bias: basic and acidic residues; the sequence is SYREDSYEGDHWNESERRREYEDRHNQD. The region spanning 272-352 is the RRM 1 domain; that stretch reads ATVVVKGLSM…RKLMFHYSQP (81 aa). Residues 378–407 form a RanBP2-type zinc finger; sequence VPTDWICTICGCINFARRTSCFQCNEPKTK. One can recognise an RRM 2 domain in the interval 432-512; that stretch reads HVLVVRGLDE…KILRVAYAKS (81 aa). Disordered stretches follow at residues 556 to 581, 631 to 656, 725 to 755, 771 to 797, 810 to 910, and 945 to 977; these read GEKQ…SAPQ, PDQN…SQQK, HETQ…STGQ, STSN…TLMG, ASSS…GITT, and SGLG…KKVD. A compositionally biased stretch (polar residues) spans 631 to 645; the sequence is PDQNNESKVTENQPD. Composition is skewed to low complexity over residues 778–793 and 823–835; these read SALT…TTGG and PSAS…VSGS. The span at 849-867 shows a compositional bias: basic and acidic residues; sequence THREQPQTSYRDRAAERRN. In terms of domain architecture, G-patch spans 928 to 974; that stretch reads ESNVGNRMLRNMGWHEGSGLGKDGSGMKEPVQAQGVDRRAGLGSQQK.

In terms of assembly, interacts with the pre-spliceosomal component U2AF65A. In terms of tissue distribution, ubiquitous with highest expression in siliques toward the end of seed maturation.

It localises to the nucleus. Functionally, splicing factor that controls alternative splicing of the developmental regulator ABI3. Reduces splicing of a cryptic intron in ABI3, leading to a decreased in ABI3-beta transcript. Regulates the splicing of the receptor-like kinase SNC4/LRKL-2.6. This is SUPPRESSOR OF ABI3-5 from Arabidopsis thaliana (Mouse-ear cress).